Here is a 234-residue protein sequence, read N- to C-terminus: Sugar fermentation stimulation protein homolog (234 aa).

Belongs to the SfsA family.

The sequence is that of Sugar fermentation stimulation protein homolog from Shewanella sp. (strain MR-7).